Reading from the N-terminus, the 228-residue chain is Gliolectin (228 aa).

The Cytoplasmic portion of the chain corresponds to 1-120 (MLCPPMALGP…NPKAVSQAPR (120 aa)). The helical; Signal-anchor for type II membrane protein transmembrane segment at 121 to 137 (GMALTPAQISASAKLIL) threads the bilayer. Residues 138 to 228 (QKCPESDRKK…GTSELADQKQ (91 aa)) are Extracellular-facing. Residues 141 to 228 (PESDRKKSNG…GTSELADQKQ (88 aa)) form a disordered region. 6 N-linked (GlcNAc...) asparagine glycosylation sites follow: Asn-149, Asn-156, Asn-198, Asn-199, Asn-205, and Asn-218. Low complexity predominate over residues 195 to 213 (NNNNNSSSSNNNSNMNINN). A compositionally biased stretch (polar residues) spans 218–228 (NGTSELADQKQ).

Expressed by a subset of glial cells found at the midline of the embryo stage 12 nervous system. Expression is highest during the formation of the embryonic axonal commissures, a process requiring midline glial cell function (at protein level).

It is found in the membrane. Its function is as follows. Has a role in intercellular carbohydrate-mediated cell adhesion. The chain is Gliolectin from Drosophila melanogaster (Fruit fly).